A 430-amino-acid chain; its full sequence is Tol-Pal system protein TolB (430 aa).

Residues 1-19 (MKKQIFFTLILLISGLARA) form the signal peptide.

Belongs to the TolB family. In terms of assembly, the Tol-Pal system is composed of five core proteins: the inner membrane proteins TolA, TolQ and TolR, the periplasmic protein TolB and the outer membrane protein Pal. They form a network linking the inner and outer membranes and the peptidoglycan layer.

The protein resides in the periplasm. Its function is as follows. Part of the Tol-Pal system, which plays a role in outer membrane invagination during cell division and is important for maintaining outer membrane integrity. The chain is Tol-Pal system protein TolB from Hahella chejuensis (strain KCTC 2396).